Reading from the N-terminus, the 256-residue chain is 2-aminoethanethiol dioxygenase (256 aa).

Residues histidine 100, histidine 102, and histidine 179 each contribute to the Fe cation site.

Monomer. It depends on Fe cation as a cofactor. In terms of tissue distribution, ubiquitous, with highest expression in brain, heart and skeletal muscle (at protein level).

It catalyses the reaction cysteamine + O2 = hypotaurine + H(+). It carries out the reaction N-terminal L-cysteinyl-[protein] + O2 = N-terminal S-hydroxy-S-oxy-L-cysteinyl-[protein] + H(+). Functionally, plays a vital role in regulating thiol metabolism and preserving oxygen homeostasis by oxidizing the sulfur of cysteamine and N-terminal cysteine-containing proteins to their corresponding sulfinic acids using O2 as a cosubstrate. Catalyzes the oxidation of cysteamine (2-aminoethanethiol) to hypotaurine. Catalyzes the oxidation of the regulator of G-protein signaling 5 (RGS5). Also oxidizes proteins RGS4 and interleukin-32 (IL32). The chain is 2-aminoethanethiol dioxygenase (Ado) from Mus musculus (Mouse).